The sequence spans 382 residues: Anhydro-N-acetylmuramic acid kinase (382 aa).

15-22 (GTSLDGVD) contributes to the ATP binding site.

It belongs to the anhydro-N-acetylmuramic acid kinase family.

The catalysed reaction is 1,6-anhydro-N-acetyl-beta-muramate + ATP + H2O = N-acetyl-D-muramate 6-phosphate + ADP + H(+). The protein operates within amino-sugar metabolism; 1,6-anhydro-N-acetylmuramate degradation. It participates in cell wall biogenesis; peptidoglycan recycling. In terms of biological role, catalyzes the specific phosphorylation of 1,6-anhydro-N-acetylmuramic acid (anhMurNAc) with the simultaneous cleavage of the 1,6-anhydro ring, generating MurNAc-6-P. Is required for the utilization of anhMurNAc either imported from the medium or derived from its own cell wall murein, and thus plays a role in cell wall recycling. This chain is Anhydro-N-acetylmuramic acid kinase, found in Haemophilus influenzae (strain ATCC 51907 / DSM 11121 / KW20 / Rd).